We begin with the raw amino-acid sequence, 172 residues long: Hemagglutinin/amebocyte aggregation factor (172 aa).

Positions 1 to 19 are cleaved as a signal peptide; that stretch reads MNSPAIVIIIFSTLTFSEA. 4 repeat units span residues 21 to 25, 50 to 54, 73 to 77, and 102 to 106. Intrachain disulfides connect Cys32–Cys58, Cys67–Cys172, Cys84–Cys110, Cys111–Cys117, and Cys123–Cys167. 2 repeat units span residues 129–133 and 158–162.

Belongs to the dermatopontin family.

The protein localises to the secreted. In terms of biological role, possesses the property of inducing both aggregation of amebocytes and agglutination of erythrocytes. In Limulus polyphemus (Atlantic horseshoe crab), this protein is Hemagglutinin/amebocyte aggregation factor.